Reading from the N-terminus, the 187-residue chain is Elongation factor P (187 aa).

The protein belongs to the elongation factor P family.

The protein localises to the cytoplasm. The protein operates within protein biosynthesis; polypeptide chain elongation. In terms of biological role, involved in peptide bond synthesis. Stimulates efficient translation and peptide-bond synthesis on native or reconstituted 70S ribosomes in vitro. Probably functions indirectly by altering the affinity of the ribosome for aminoacyl-tRNA, thus increasing their reactivity as acceptors for peptidyl transferase. The chain is Elongation factor P from Prochlorococcus marinus (strain NATL2A).